The following is a 323-amino-acid chain: Beta-ketoacyl-[acyl-carrier-protein] synthase III (323 aa).

Residues C113 and H250 contribute to the active site. The ACP-binding stretch occupies residues 251–255; sequence QANRR. Residue N280 is part of the active site.

The protein belongs to the thiolase-like superfamily. FabH family. In terms of assembly, homodimer.

Its subcellular location is the cytoplasm. It catalyses the reaction malonyl-[ACP] + acetyl-CoA + H(+) = 3-oxobutanoyl-[ACP] + CO2 + CoA. Its pathway is lipid metabolism; fatty acid biosynthesis. Functionally, catalyzes the condensation reaction of fatty acid synthesis by the addition to an acyl acceptor of two carbons from malonyl-ACP. Catalyzes the first condensation reaction which initiates fatty acid synthesis and may therefore play a role in governing the total rate of fatty acid production. Possesses both acetoacetyl-ACP synthase and acetyl transacylase activities. Its substrate specificity determines the biosynthesis of branched-chain and/or straight-chain of fatty acids. This is Beta-ketoacyl-[acyl-carrier-protein] synthase III from Sinorhizobium medicae (strain WSM419) (Ensifer medicae).